We begin with the raw amino-acid sequence, 62 residues long: UPF0434 protein RL4569 (62 aa).

The protein belongs to the UPF0434 family.

The sequence is that of UPF0434 protein RL4569 from Rhizobium johnstonii (strain DSM 114642 / LMG 32736 / 3841) (Rhizobium leguminosarum bv. viciae).